Consider the following 146-residue polypeptide: Cytochrome b5 type B (146 aa).

The propeptide occupies 1-11; it reads MATPEASGSGR. In terms of domain architecture, Cytochrome b5 heme-binding spans 20–96; sequence VTYYRLEEVA…LKQYYIGDVH (77 aa). Lysine 30 is subject to N6-acetyllysine. The heme site is built by histidine 55 and histidine 79. Serine 80 bears the Phosphoserine mark. Residues 119 to 136 form a helical membrane-spanning segment; that stretch reads WAYWIVPIVGAILIGFLY.

The protein belongs to the cytochrome b5 family. As to quaternary structure, component of a complex composed of cytochrome b5, NADH-cytochrome b5 reductase (CYB5R3) and MTARC2.

It localises to the mitochondrion outer membrane. Functionally, cytochrome b5 is a membrane-bound hemoprotein functioning as an electron carrier for several membrane-bound oxygenases. The chain is Cytochrome b5 type B (Cyb5b) from Rattus norvegicus (Rat).